The chain runs to 306 residues: Ribonuclease Z (306 aa).

7 residues coordinate Zn(2+): H63, H65, D67, H68, H141, D211, and H269. Residue D67 is the Proton acceptor of the active site.

It belongs to the RNase Z family. As to quaternary structure, homodimer. Zn(2+) is required as a cofactor.

The enzyme catalyses Endonucleolytic cleavage of RNA, removing extra 3' nucleotides from tRNA precursor, generating 3' termini of tRNAs. A 3'-hydroxy group is left at the tRNA terminus and a 5'-phosphoryl group is left at the trailer molecule.. In terms of biological role, zinc phosphodiesterase, which displays some tRNA 3'-processing endonuclease activity. Probably involved in tRNA maturation, by removing a 3'-trailer from precursor tRNA. The chain is Ribonuclease Z from Staphylococcus aureus (strain bovine RF122 / ET3-1).